Reading from the N-terminus, the 489-residue chain is MSVFGLQRLYIGGGYVDATSGKTFDTFDPATGELLAQVQQASAADVDRAVASAQEGQREWAAMTAMQRSRILRRAVDLLRERNDELAALETRDTGKPIGETLAVDIVTGADVIEYYAGLATAIEGLQVPLRAESFVYTRREPLGVCAGIGAWNYPIQIACWKTAPALAAGNAMVFKPSEVTPLTALKLAEIYTEAGVPAGVFNVVQGDGSVGALLTGHPDIAKVSFTGGVETGKKVMSLAGASSLKEVTMELGGKSPLIVFDDADLDRAADIAVTANFFSSGQVCTNGTRVFVHRSIKDAFTQRVLERVKRIRVGKPTDADTNFGPLVSAAQLDKVLGFIESGKAEGAKLLAGGTRLTDGHFGSGQYVAPTVFGDCRDDMKIVREEIFGPVMSILDFESEDEVIARANDTHYGLAAGVVTENLSRAHRTIHRLEAGICWINTWGESPAEMPVGGYKQSGVGRENGITTLEHYTRIKSVQVELGRYNPVF.

K(+) is bound by residues Thr-26 and Asp-93. 150–152 contributes to the NAD(+) binding site; sequence GAW. The Charge relay system role is filled by Lys-162. Residue 176-179 participates in NAD(+) binding; the sequence is KPSE. Val-180 contacts K(+). 229–232 contacts NAD(+); sequence GVET. Leu-245 is a binding site for K(+). Glu-251 (proton acceptor) is an active-site residue. NAD(+) is bound by residues Gly-253, Cys-285, and Glu-386. The Nucleophile role is filled by Cys-285. A Cysteine sulfenic acid (-SOH) modification is found at Cys-285. The K(+) site is built by Lys-456 and Gly-459. Glu-463 serves as the catalytic Charge relay system.

Belongs to the aldehyde dehydrogenase family. As to quaternary structure, dimer of dimers. K(+) serves as cofactor.

The enzyme catalyses betaine aldehyde + NAD(+) + H2O = glycine betaine + NADH + 2 H(+). It functions in the pathway amine and polyamine biosynthesis; betaine biosynthesis via choline pathway; betaine from betaine aldehyde: step 1/1. Functionally, involved in the biosynthesis of the osmoprotectant glycine betaine. Catalyzes the irreversible oxidation of betaine aldehyde to the corresponding acid. The polypeptide is Betaine aldehyde dehydrogenase (Burkholderia lata (strain ATCC 17760 / DSM 23089 / LMG 22485 / NCIMB 9086 / R18194 / 383)).